Consider the following 456-residue polypeptide: Kynurenine 3-monooxygenase (456 aa).

The protein belongs to the aromatic-ring hydroxylase family. KMO subfamily. FAD is required as a cofactor.

The catalysed reaction is L-kynurenine + NADPH + O2 + H(+) = 3-hydroxy-L-kynurenine + NADP(+) + H2O. It functions in the pathway cofactor biosynthesis; NAD(+) biosynthesis; quinolinate from L-kynurenine: step 1/3. Its function is as follows. Catalyzes the hydroxylation of L-kynurenine (L-Kyn) to form 3-hydroxy-L-kynurenine (L-3OHKyn). Required for synthesis of quinolinic acid. The polypeptide is Kynurenine 3-monooxygenase (Xanthomonas campestris pv. campestris (strain 8004)).